We begin with the raw amino-acid sequence, 81 residues long: Protein RADIALIS-like 3 (81 aa).

Residues S7–N62 form the SANT domain.

Expressed just outside the vascular bundles in the rosette stem and the leaf traces. Not detected in floral primordia.

The protein resides in the nucleus. Functionally, probable transcription factor. This chain is Protein RADIALIS-like 3 (RL3), found in Arabidopsis thaliana (Mouse-ear cress).